Reading from the N-terminus, the 324-residue chain is Malate dehydrogenase (324 aa).

Residues 20–25 (GAGNVG) and Asp44 contribute to the NAD(+) site. Substrate contacts are provided by Arg93 and Arg99. Residues Asn106 and 129–131 (VTN) each bind NAD(+). The substrate site is built by Asn131 and Arg162. The Proton acceptor role is filled by His186.

The protein belongs to the LDH/MDH superfamily. MDH type 3 family.

It carries out the reaction (S)-malate + NAD(+) = oxaloacetate + NADH + H(+). Functionally, catalyzes the reversible oxidation of malate to oxaloacetate. This Synechocystis sp. (strain ATCC 27184 / PCC 6803 / Kazusa) protein is Malate dehydrogenase.